We begin with the raw amino-acid sequence, 307 residues long: Glutaminase (307 aa).

Substrate contacts are provided by Ser-67, Asn-117, Glu-161, Asn-168, Tyr-192, Tyr-243, and Val-261.

The protein belongs to the glutaminase family. As to quaternary structure, homotetramer.

The enzyme catalyses L-glutamine + H2O = L-glutamate + NH4(+). The chain is Glutaminase from Streptomyces coelicolor (strain ATCC BAA-471 / A3(2) / M145).